The primary structure comprises 137 residues: Large ribosomal subunit protein uL16 (137 aa).

The protein belongs to the universal ribosomal protein uL16 family. In terms of assembly, part of the 50S ribosomal subunit.

Its function is as follows. Binds 23S rRNA and is also seen to make contacts with the A and possibly P site tRNAs. The protein is Large ribosomal subunit protein uL16 of Methylococcus capsulatus (strain ATCC 33009 / NCIMB 11132 / Bath).